The sequence spans 166 residues: Mitochondrial translation release factor in rescue (166 aa).

Residues 1–35 (MSTVGLFHFPTPLTRICPAPWGLRLWEKLTLLSPG) constitute a mitochondrion transit peptide. The tract at residues 57–121 (ENELEEQFVK…LQEKVDVFYN (65 aa)) is GGQ domain. Residues 71 to 73 (GGQ) carry the GGQ motif. Glutamine 73 bears the N5-methylglutamine mark. The interval 122 to 148 (GENSPVHKEKREAAKKKQERKKRAKET) is disordered. The segment covering 126-137 (PVHKEKREAAKK) has biased composition (basic and acidic residues). Residues 127-160 (VHKEKREAAKKKQERKKRAKETLEKKKLLKELWE) are a coiled coil.

This sequence belongs to the prokaryotic/mitochondrial release factor family. In terms of assembly, interacts (via C-terminus) with MTRES1 (via S4 domain). Associates with mitoribosomal S39 large subunit, peptidyl tRNA and nascent chain. Post-translationally, methylation of glutamine in the GGQ triplet by HEMK1. Expressed in all areas of the brain tested.

Its subcellular location is the mitochondrion. Its function is as follows. Part of a mitoribosome-associated quality control pathway that prevents aberrant translation by responding to interruptions during elongation. As heterodimer with MTRES1, ejects the unfinished nascent chain and peptidyl transfer RNA (tRNA), respectively, from stalled ribosomes. Recruitment of mitoribosome biogenesis factors to these quality control intermediates suggests additional roles for MTRES1 and MTRF during mitoribosome rescue. The sequence is that of Mitochondrial translation release factor in rescue from Homo sapiens (Human).